The primary structure comprises 394 residues: Probable ribosome production factor 1 (394 aa).

2 disordered regions span residues 1 to 98 and 116 to 152; these read MIKI…PVLN and MKKE…EKDQ. Acidic residues-rich tracts occupy residues 15–33 and 59–88; these read QDSD…DLEV and ASED…DDDD. The span at 116–134 shows a compositional bias: basic residues; that stretch reads MKKEKHKKKMQERRARRKA. Residues 185–369 enclose the Brix domain; it reads PKVLITFADN…LRSLQEGTFD (185 aa). The RNA-binding stretch occupies residues 347-364; it reads VKLRELGPRFTLKLRSLQ.

It is found in the nucleus. The protein localises to the nucleolus. May be required for ribosome biogenesis. In Drosophila melanogaster (Fruit fly), this protein is Probable ribosome production factor 1.